The following is a 554-amino-acid chain: MAYYRNPSDVTAMPAWQALTKHRQAMQDFSMREAFTDDPKRFSQFTLSSAGLFLDYSKNLITAETRDLLVALAGEVGLKDAIKAQYYGELVNSSEGRPALHTALRRPVGDKLKVNGVDVIPDVHRVLNQMTELVGRIHDGLWRGYTEKPITDVVNIGIGGSFLGPELVSEALVAYAHKGVRCHYLANIDGSEFHELSMKIRAETTLFIVSSKSFNTLETLKNAQAARAWYLAQGGSEVELHRHFIAVSSNNAAAVAFGIREENIFPMWDWVGGRYSLWSAIGLPIALAIGMSNFKELLSGAYTMDQHFQSAPFDQNMPVLLALLGVWYGNFWNAQSHAILPYDHYLRNITKHLQQLDMESNGKSVRQDGTPALTDTGPVIWGGVGANGQHAYHQLLHQGTQMIPADFIVPIVSFNPVADHHQWLYANCLSQSQALMMGKTRAEAEAELRDKGMSEEEVQKLAPHKVIPGNRPSNTLVVERISPRRLGALVAMYEHKVFVQSVIWGTNAFDQWGVELGKEMGKAVYQRLTGGTEEPADDASTQGLINYFRGRHRG.

The active-site Proton donor is the E359. Catalysis depends on residues H390 and K518.

It belongs to the GPI family.

The protein localises to the cytoplasm. The enzyme catalyses alpha-D-glucose 6-phosphate = beta-D-fructose 6-phosphate. It functions in the pathway carbohydrate biosynthesis; gluconeogenesis. It participates in carbohydrate degradation; glycolysis; D-glyceraldehyde 3-phosphate and glycerone phosphate from D-glucose: step 2/4. Functionally, catalyzes the reversible isomerization of glucose-6-phosphate to fructose-6-phosphate. The polypeptide is Glucose-6-phosphate isomerase (Pseudomonas syringae pv. tomato (strain ATCC BAA-871 / DC3000)).